A 312-amino-acid polypeptide reads, in one-letter code: Pyridoxal kinase (312 aa).

An N-acetylmethionine modification is found at M1. Positions 12 and 47 each coordinate pyridoxal. T47 contributes to the pyridoxal 5'-phosphate binding site. At S59 the chain carries Phosphoserine. D113 is an ATP binding site. D113 lines the Na(+) pocket. D118 provides a ligand contact to Mg(2+). T148 is a binding site for Na(+). An ATP-binding site is contributed by 150-153 (NQFE). The residue at position 164 (S164) is a Phosphoserine. Position 186 (T186) interacts with Na(+). 186 to 187 (TS) is an ATP binding site. Phosphoserine is present on S213. ATP contacts are provided by residues 226-228 (VDA) and T233. 234-235 (GD) provides a ligand contact to pyridoxal 5'-phosphate. D235 acts as the Proton acceptor in catalysis. The residue at position 285 (S285) is a Phosphoserine.

The protein belongs to the pyridoxine kinase family. As to quaternary structure, homodimer. The cofactor is Mg(2+). It depends on Zn(2+) as a cofactor. Requires Co(2+) as cofactor. Mn(2+) serves as cofactor. Ubiquitous. Highly expressed in testis. As to expression, in adult testis and spermatozoa.

The protein resides in the cytoplasm. Its subcellular location is the cytosol. It carries out the reaction pyridoxal + ATP = pyridoxal 5'-phosphate + ADP + H(+). The catalysed reaction is pyridoxamine + ATP = pyridoxamine 5'-phosphate + ADP + H(+). The enzyme catalyses pyridoxine + ATP = pyridoxine 5'-phosphate + ADP + H(+). It functions in the pathway cofactor metabolism; pyridoxal 5'-phosphate salvage; pyridoxal 5'-phosphate from pyridoxal: step 1/1. Its pathway is cofactor metabolism; pyridoxal 5'-phosphate salvage; pyridoxine 5'-phosphate from pyridoxine: step 1/1. The protein operates within cofactor metabolism; pyridoxal 5'-phosphate salvage; pyridoxamine 5'-phosphate from pyridoxamine: step 1/1. With respect to regulation, catalytic activity is inhibited competitively by 4-deoxypyridoxine, and is also inhibited by the benzodiazepine receptor ligands 1012S and ethyl-beta-carboline-3-carboxylate. Inhibited by ginkgotoxin, theophylline, lamotrigine, enprofylline, theobromine, and caffeine. Activity is increased in the presence of K(+)or Na(+). Functionally, catalyzes the phosphorylation of the dietary vitamin B6 vitamers pyridoxal (PL), pyridoxine (PN) and pyridoxamine (PM) to form pyridoxal 5'-phosphate (PLP), pyridoxine 5'-phosphate (PNP) and pyridoxamine 5'-phosphate (PMP), respectively. PLP is the active form of vitamin B6, and acts as a cofactor for over 140 different enzymatic reactions. The chain is Pyridoxal kinase from Homo sapiens (Human).